The following is a 557-amino-acid chain: Probable phenylalanine--tRNA ligase beta subunit (557 aa).

One can recognise a B5 domain in the interval Met276–Arg352. Residues Asp330, Asp336, Glu339, and Asp340 each coordinate Mg(2+).

It belongs to the phenylalanyl-tRNA synthetase beta subunit family. Type 2 subfamily. Tetramer of two alpha and two beta subunits. Mg(2+) serves as cofactor.

Its subcellular location is the cytoplasm. The enzyme catalyses tRNA(Phe) + L-phenylalanine + ATP = L-phenylalanyl-tRNA(Phe) + AMP + diphosphate + H(+). This is Probable phenylalanine--tRNA ligase beta subunit from Encephalitozoon cuniculi (strain GB-M1) (Microsporidian parasite).